A 73-amino-acid chain; its full sequence is uncharacterized protein (73 aa).

The next 2 membrane-spanning stretches (helical) occupy residues 4 to 24 (LIPV…SPCV) and 51 to 71 (AGAI…IIAL).

It is found in the cell membrane. This is an uncharacterized protein from Escherichia coli O157:H7.